The sequence spans 100 residues: Urease subunit gamma (100 aa).

The protein belongs to the urease gamma subunit family. In terms of assembly, heterotrimer of UreA (gamma), UreB (beta) and UreC (alpha) subunits. Three heterotrimers associate to form the active enzyme.

It is found in the cytoplasm. It carries out the reaction urea + 2 H2O + H(+) = hydrogencarbonate + 2 NH4(+). It functions in the pathway nitrogen metabolism; urea degradation; CO(2) and NH(3) from urea (urease route): step 1/1. The protein is Urease subunit gamma of Bacillus sp. (strain TB-90).